A 183-amino-acid chain; its full sequence is Orotate phosphoribosyltransferase (183 aa).

Residues arginine 21, lysine 88, and 112–120 each bind 5-phospho-alpha-D-ribose 1-diphosphate; that span reads EDVVTTGES. Orotate is bound by residues threonine 116 and arginine 144.

This sequence belongs to the purine/pyrimidine phosphoribosyltransferase family. PyrE subfamily. Homodimer. Requires Mg(2+) as cofactor.

The catalysed reaction is orotidine 5'-phosphate + diphosphate = orotate + 5-phospho-alpha-D-ribose 1-diphosphate. It participates in pyrimidine metabolism; UMP biosynthesis via de novo pathway; UMP from orotate: step 1/2. Catalyzes the transfer of a ribosyl phosphate group from 5-phosphoribose 1-diphosphate to orotate, leading to the formation of orotidine monophosphate (OMP). The protein is Orotate phosphoribosyltransferase of Thermus thermophilus (strain ATCC 27634 / DSM 579 / HB8).